We begin with the raw amino-acid sequence, 458 residues long: UPF0210 protein Mevan_0738 (458 aa).

The protein belongs to the UPF0210 family.

In Methanococcus vannielii (strain ATCC 35089 / DSM 1224 / JCM 13029 / OCM 148 / SB), this protein is UPF0210 protein Mevan_0738.